A 369-amino-acid polypeptide reads, in one-letter code: Queuine tRNA-ribosyltransferase (369 aa).

The active-site Proton acceptor is the aspartate 89. Residues 89-93 (DSGGF), aspartate 142, glutamine 184, and glycine 211 contribute to the substrate site. Residues 242 to 248 (GGGSPEL) form an RNA binding region. The Nucleophile role is filled by aspartate 261. Positions 266–270 (TRIAR) are RNA binding; important for wobble base 34 recognition. Residues cysteine 299, cysteine 301, cysteine 304, and histidine 330 each contribute to the Zn(2+) site.

Belongs to the queuine tRNA-ribosyltransferase family. As to quaternary structure, homodimer. Within each dimer, one monomer is responsible for RNA recognition and catalysis, while the other monomer binds to the replacement base PreQ1. It depends on Zn(2+) as a cofactor.

The enzyme catalyses 7-aminomethyl-7-carbaguanine + guanosine(34) in tRNA = 7-aminomethyl-7-carbaguanosine(34) in tRNA + guanine. It functions in the pathway tRNA modification; tRNA-queuosine biosynthesis. Its function is as follows. Catalyzes the base-exchange of a guanine (G) residue with the queuine precursor 7-aminomethyl-7-deazaguanine (PreQ1) at position 34 (anticodon wobble position) in tRNAs with GU(N) anticodons (tRNA-Asp, -Asn, -His and -Tyr). Catalysis occurs through a double-displacement mechanism. The nucleophile active site attacks the C1' of nucleotide 34 to detach the guanine base from the RNA, forming a covalent enzyme-RNA intermediate. The proton acceptor active site deprotonates the incoming PreQ1, allowing a nucleophilic attack on the C1' of the ribose to form the product. After dissociation, two additional enzymatic reactions on the tRNA convert PreQ1 to queuine (Q), resulting in the hypermodified nucleoside queuosine (7-(((4,5-cis-dihydroxy-2-cyclopenten-1-yl)amino)methyl)-7-deazaguanosine). In Thermotoga maritima (strain ATCC 43589 / DSM 3109 / JCM 10099 / NBRC 100826 / MSB8), this protein is Queuine tRNA-ribosyltransferase.